We begin with the raw amino-acid sequence, 595 residues long: Elongation factor 4 (595 aa).

The 182-residue stretch at 2–183 (KNIRNFCIIA…AIVEQVPAPA (182 aa)) folds into the tr-type G domain. GTP is bound by residues 14 to 19 (DHGKST) and 130 to 133 (NKVD).

Belongs to the TRAFAC class translation factor GTPase superfamily. Classic translation factor GTPase family. LepA subfamily.

Its subcellular location is the cell inner membrane. It catalyses the reaction GTP + H2O = GDP + phosphate + H(+). Required for accurate and efficient protein synthesis under certain stress conditions. May act as a fidelity factor of the translation reaction, by catalyzing a one-codon backward translocation of tRNAs on improperly translocated ribosomes. Back-translocation proceeds from a post-translocation (POST) complex to a pre-translocation (PRE) complex, thus giving elongation factor G a second chance to translocate the tRNAs correctly. Binds to ribosomes in a GTP-dependent manner. The polypeptide is Elongation factor 4 (Porphyromonas gingivalis (strain ATCC BAA-308 / W83)).